The chain runs to 279 residues: 3-methyl-2-oxobutanoate hydroxymethyltransferase (279 aa).

Mg(2+) contacts are provided by D44 and D83. Residues 44–45, D83, and K113 contribute to the 3-methyl-2-oxobutanoate site; that span reads DS. Residue E115 coordinates Mg(2+). E182 (proton acceptor) is an active-site residue.

This sequence belongs to the PanB family. In terms of assembly, homodecamer; pentamer of dimers. The cofactor is Mg(2+).

The protein localises to the cytoplasm. The catalysed reaction is 3-methyl-2-oxobutanoate + (6R)-5,10-methylene-5,6,7,8-tetrahydrofolate + H2O = 2-dehydropantoate + (6S)-5,6,7,8-tetrahydrofolate. It participates in cofactor biosynthesis; (R)-pantothenate biosynthesis; (R)-pantoate from 3-methyl-2-oxobutanoate: step 1/2. Catalyzes the reversible reaction in which hydroxymethyl group from 5,10-methylenetetrahydrofolate is transferred onto alpha-ketoisovalerate to form ketopantoate. The sequence is that of 3-methyl-2-oxobutanoate hydroxymethyltransferase from Dehalococcoides mccartyi (strain ATCC BAA-2100 / JCM 16839 / KCTC 5957 / BAV1).